The primary structure comprises 133 residues: Sporulation-specific protein 2 (133 aa).

It belongs to the VPS13 family. In terms of assembly, interacts with spo13 and spo15.

It is found in the cytoplasm. The protein resides in the cytoskeleton. It localises to the microtubule organizing center. The protein localises to the spindle pole body. In terms of biological role, involved in sporulation. Plays a significant role in modification of the spindle pole body prior to spore formation and is required for initiating forespore membrane formation. Assists in the localization of spo13 to the outer surface of the SPB. In Schizosaccharomyces pombe (strain 972 / ATCC 24843) (Fission yeast), this protein is Sporulation-specific protein 2 (spo2).